The following is a 69-amino-acid chain: Cytochrome c oxidase subunit 8A, mitochondrial (69 aa).

The transit peptide at 1–25 (MSVLTPLLLRGLTGSARRLPVPRAQ) directs the protein to the mitochondrion. Positions 2–19 (SVLTPLLLRGLTGSARRL) match the SIFI-degron motif. At 26 to 36 (VHSMPPEQKLG) the chain is on the mitochondrial matrix side. A helical membrane pass occupies residues 37–60 (VLELAIGFTSCLVTFLLPAGWILS). Over 61–69 (HLDSYKKRG) the chain is Mitochondrial intermembrane.

This sequence belongs to the cytochrome c oxidase VIII family. In terms of assembly, component of the cytochrome c oxidase (complex IV, CIV), a multisubunit enzyme composed of 14 subunits. The complex is composed of a catalytic core of 3 subunits MT-CO1, MT-CO2 and MT-CO3, encoded in the mitochondrial DNA, and 11 supernumerary subunits COX4I, COX5A, COX5B, COX6A, COX6B, COX6C, COX7A, COX7B, COX7C, COX8 and NDUFA4, which are encoded in the nuclear genome. The complex exists as a monomer or a dimer and forms supercomplexes (SCs) in the inner mitochondrial membrane with NADH-ubiquinone oxidoreductase (complex I, CI) and ubiquinol-cytochrome c oxidoreductase (cytochrome b-c1 complex, complex III, CIII), resulting in different assemblies (supercomplex SCI(1)III(2)IV(1) and megacomplex MCI(2)III(2)IV(2)). Post-translationally, in response to mitochondrial stress, the precursor protein is ubiquitinated by the SIFI complex in the cytoplasm before mitochondrial import, leading to its degradation. Within the SIFI complex, UBR4 initiates ubiquitin chain that are further elongated or branched by KCMF1.

The protein resides in the mitochondrion inner membrane. It participates in energy metabolism; oxidative phosphorylation. Its function is as follows. Component of the cytochrome c oxidase, the last enzyme in the mitochondrial electron transport chain which drives oxidative phosphorylation. The respiratory chain contains 3 multisubunit complexes succinate dehydrogenase (complex II, CII), ubiquinol-cytochrome c oxidoreductase (cytochrome b-c1 complex, complex III, CIII) and cytochrome c oxidase (complex IV, CIV), that cooperate to transfer electrons derived from NADH and succinate to molecular oxygen, creating an electrochemical gradient over the inner membrane that drives transmembrane transport and the ATP synthase. Cytochrome c oxidase is the component of the respiratory chain that catalyzes the reduction of oxygen to water. Electrons originating from reduced cytochrome c in the intermembrane space (IMS) are transferred via the dinuclear copper A center (CU(A)) of subunit 2 and heme A of subunit 1 to the active site in subunit 1, a binuclear center (BNC) formed by heme A3 and copper B (CU(B)). The BNC reduces molecular oxygen to 2 water molecules using 4 electrons from cytochrome c in the IMS and 4 protons from the mitochondrial matrix. This is Cytochrome c oxidase subunit 8A, mitochondrial (COX8A) from Saimiri sciureus (Common squirrel monkey).